A 507-amino-acid chain; its full sequence is Eukaryotic translation initiation factor 4E-binding protein Mextli homolog (507 aa).

Residues 126 to 163 (RPEGQHDPAPTVGIPPSATSPPTQVTSSVTSPVPSSPQ) form a disordered region. Positions 140–158 (PPSATSPPTQVTSSVTSPV) are enriched in low complexity. One can recognise a KH domain in the interval 242–307 (QLRHEMIIRN…EDIERAKDMI (66 aa)). 2 disordered regions span residues 314 to 360 (NMSP…DEDI) and 395 to 424 (ARPS…QQEP). The span at 329–348 (QYSGMSSENQSIPSQQNTAN) shows a compositional bias: polar residues. The span at 349-360 (IDEDDDDDDEDI) shows a compositional bias: acidic residues.

Interacts with eukaryotic translation initiation factor ife-3.

The protein resides in the cytoplasm. In terms of biological role, plays a role in promoting translation. The polypeptide is Eukaryotic translation initiation factor 4E-binding protein Mextli homolog (Caenorhabditis elegans).